The primary structure comprises 137 residues: MFYSTTSWFQKATLAIGIGTTLYVLFKDLVRDQEAKSESKSRKKVMILVDETTSEEDIKKWSDYDLFLASRSTLLSKHTSRLESYVSHPSKALRCDDPDSILTFLKHLDINILVWNAHWSSERLKTQCENLVYILVE.

This is an uncharacterized protein from Schizosaccharomyces pombe (strain 972 / ATCC 24843) (Fission yeast).